Here is a 290-residue protein sequence, read N- to C-terminus: Cilia- and flagella-associated protein 298 (290 aa).

Tyr264 is modified (phosphotyrosine).

Belongs to the CFAP298 family. As to quaternary structure, interacts with ZMYND10.

The protein resides in the cytoplasm. It localises to the cytoskeleton. It is found in the cilium basal body. Plays a role in motile cilium function, possibly by acting on outer dynein arm assembly. Seems to be important for initiation rather than maintenance of cilium motility. Required for correct positioning of the cilium at the apical cell surface, suggesting an additional role in the planar cell polarity (PCP) pathway. May suppress canonical Wnt signaling activity. The chain is Cilia- and flagella-associated protein 298 from Homo sapiens (Human).